The sequence spans 269 residues: Shikimate dehydrogenase (NADP(+)) (269 aa).

Shikimate is bound by residues 14–16 (SKS) and threonine 61. Lysine 65 (proton acceptor) is an active-site residue. Glutamate 77 serves as a coordination point for NADP(+). 2 residues coordinate shikimate: asparagine 86 and aspartate 102. NADP(+)-binding positions include 126–130 (GAGGA), 149–154 (NRTLTK), and methionine 213. Tyrosine 215 lines the shikimate pocket. Glycine 238 provides a ligand contact to NADP(+).

The protein belongs to the shikimate dehydrogenase family. As to quaternary structure, homodimer.

The enzyme catalyses shikimate + NADP(+) = 3-dehydroshikimate + NADPH + H(+). Its pathway is metabolic intermediate biosynthesis; chorismate biosynthesis; chorismate from D-erythrose 4-phosphate and phosphoenolpyruvate: step 4/7. Its function is as follows. Involved in the biosynthesis of the chorismate, which leads to the biosynthesis of aromatic amino acids. Catalyzes the reversible NADPH linked reduction of 3-dehydroshikimate (DHSA) to yield shikimate (SA). The chain is Shikimate dehydrogenase (NADP(+)) from Actinobacillus succinogenes (strain ATCC 55618 / DSM 22257 / CCUG 43843 / 130Z).